The primary structure comprises 366 residues: MTAEEFDFSSHSHRRYNPLTDSWILVSPHRAKRPWLGQQEAAYKPTAPLYDPKCYLCPGNKRATGNLNPRYESTYIFPNDYAAVRLDQPILPQNDSNEDNLKNRLLKVQSVRGNCFVICFSPNHNLTIPQMKQSDLVHIVNSWQALTDDLSREARENHKPFKYVQIFENKGTAMGCSNLHPHGQAWCLESIPSEVSQELKSFDKYKREHNTDLFADYVKLESREKSRVVVENESFIVVVPYWAIWPFETLVISKKKLASISQFNQMVKEDLASILKQLTIKYDNLFETSFPYSMGIHQAPLNATGDELSNSWFHMHFYPPLLRSATVRKFLVGFELLGEPQRDLTSEQAAEKLRNLDGQIHYLQRL.

Ser27 carries the post-translational modification Phosphoserine. The Zn(2+) site is built by Cys54 and Cys57. UDP-alpha-D-glucose is bound by residues Ala63 and 79–80; that span reads ND. His124 contributes to the Zn(2+) binding site. A UDP-alpha-D-glucose-binding site is contributed by Asn169. His180 contributes to the Zn(2+) binding site. His182 (tele-UMP-histidine intermediate) is an active-site residue. Gln184 serves as a coordination point for UDP-alpha-D-glucose. Fe cation-binding residues include Glu198, His297, His314, and His316. UDP-alpha-D-glucose contacts are provided by residues 329–332 and 334–335; these read KFLV and FE.

The protein belongs to the galactose-1-phosphate uridylyltransferase type 1 family. As to quaternary structure, homodimer. Zn(2+) is required as a cofactor.

The enzyme catalyses alpha-D-galactose 1-phosphate + UDP-alpha-D-glucose = alpha-D-glucose 1-phosphate + UDP-alpha-D-galactose. Its pathway is carbohydrate metabolism; galactose metabolism. This Saccharomyces cerevisiae (strain ATCC 204508 / S288c) (Baker's yeast) protein is Galactose-1-phosphate uridylyltransferase (GAL7).